A 1480-amino-acid chain; its full sequence is Heme-responsive zinc finger transcription factor HAP1 (1480 aa).

The span at 1 to 50 (MSNTPYNSSVPSIASMTQSSVSRSPNMHTATTPGANTSSNSPPLHMSSDS) shows a compositional bias: polar residues. The tract at residues 1-56 (MSNTPYNSSVPSIASMTQSSVSRSPNMHTATTPGANTSSNSPPLHMSSDSSKIKRK) is disordered. Zn(2+)-binding residues include C64, C67, C74, C81, C84, and C93. Residues 64 to 93 (CTICRKRKVKCDKLRPHCQQCTKTGVAHLC) constitute a DNA-binding region (zn(2)-C6 fungal-type). A coiled-coil region spans residues 105–134 (EKELLKDNELKKLRERVKSLEKTLSKVHSS). The disordered stretch occupies residues 126 to 208 (KTLSKVHSSP…ANSSSLSISN (83 aa)). Over residues 130 to 142 (KVHSSPSSNSLKS) the composition is skewed to low complexity. Polar residues-rich tracts occupy residues 143–152 (YNTPESSNLF) and 160–176 (TLVN…SHMH). Over residues 177–208 (QQQQQQQQQEQQQDFSRSANANANSSSLSISN) the composition is skewed to low complexity. The interval 244 to 441 (KGDPYLKLLW…NTIPHHQPQS (198 aa)) is heme-responsive; required for HMC formation. HRM repeat units lie at residues 280–285 (KCPINH), 296–301 (KCPVDH), 320–325 (KCPVDH), 344–349 (RCPVDH), 386–391 (KCPVDH), and 412–417 (RCPIDH). Composition is skewed to polar residues over residues 429 to 444 (STHN…SGSH) and 703 to 731 (QLNA…NPTL). Disordered stretches follow at residues 429–456 (STHN…RKHD) and 703–764 (QLNA…KENQ). A compositionally biased stretch (low complexity) spans 732-756 (NNNMSAATTNSSSRSGSADSRSGSN). The stretch at 1189 to 1194 (KCPVYQ) is one HRM 7 repeat. The interval 1381 to 1408 (TANTDTSANGSALSTLTSPQGSDLASNS) is disordered. Residues 1385–1408 (DTSANGSALSTLTSPQGSDLASNS) are compositionally biased toward polar residues.

As to quaternary structure, binds DNA as a homodimer. Interacts with SRO9 and YDJ1. In the absence of heme, binds to at least four cellular proteins, including YDJ1 and SRO9, forming a high-molecular-weight complex (HMC) which results in repression of its activity and dictates its DNA-binding specificity.

The protein resides in the nucleus. Its function is as follows. Regulation of oxygen dependent gene expression. It modulates the expression of Iso-1 (CYP1) and Iso-2 (CYP3) cytochrome c. In response to heme, promotes transcription of genes encoding functions required for respiration, controlling oxidative damage and repression of anaerobic genes. Binds to the sequence 5'-CGGNNNTNNCGG-3'. Is non-functional in terms of iso-1 cytochrome c expression in strain S288c and its derivatives. This Saccharomyces cerevisiae (strain Kyokai no. 7 / NBRC 101557) (Baker's yeast) protein is Heme-responsive zinc finger transcription factor HAP1 (HAP1).